A 475-amino-acid polypeptide reads, in one-letter code: Ribulose bisphosphate carboxylase large chain (475 aa).

A propeptide spanning residues 1-2 (MS) is cleaved from the precursor. Position 3 is an N-acetylproline (proline 3). An N6,N6,N6-trimethyllysine modification is found at lysine 14. Residues asparagine 123 and threonine 173 each contribute to the substrate site. Lysine 175 serves as the catalytic Proton acceptor. Residue lysine 177 participates in substrate binding. Residues lysine 201, aspartate 203, and glutamate 204 each contribute to the Mg(2+) site. Position 201 is an N6-carboxylysine (lysine 201). The Proton acceptor role is filled by histidine 294. Substrate-binding residues include arginine 295, histidine 327, and serine 379.

The protein belongs to the RuBisCO large chain family. Type I subfamily. In terms of assembly, heterohexadecamer of 8 large chains and 8 small chains; disulfide-linked. The disulfide link is formed within the large subunit homodimers. The cofactor is Mg(2+). Post-translationally, the disulfide bond which can form in the large chain dimeric partners within the hexadecamer appears to be associated with oxidative stress and protein turnover.

It localises to the plastid. The protein localises to the chloroplast. The enzyme catalyses 2 (2R)-3-phosphoglycerate + 2 H(+) = D-ribulose 1,5-bisphosphate + CO2 + H2O. It carries out the reaction D-ribulose 1,5-bisphosphate + O2 = 2-phosphoglycolate + (2R)-3-phosphoglycerate + 2 H(+). Its function is as follows. RuBisCO catalyzes two reactions: the carboxylation of D-ribulose 1,5-bisphosphate, the primary event in carbon dioxide fixation, as well as the oxidative fragmentation of the pentose substrate in the photorespiration process. Both reactions occur simultaneously and in competition at the same active site. The polypeptide is Ribulose bisphosphate carboxylase large chain (Betula papyrifera (Paper birch)).